The primary structure comprises 183 residues: NEDD8-conjugating enzyme Ubc12 (183 aa).

Residue Met1 is modified to N-acetylmethionine. The disordered stretch occupies residues 1-28 (MIKLFSLKQQKKEEESAGGTKGSSKKAS). Residues 29 to 173 (AAQLRIQKDI…VQRSMRGGYI (145 aa)) enclose the UBC core domain. Catalysis depends on Cys111, which acts as the Glycyl thioester intermediate.

The protein belongs to the ubiquitin-conjugating enzyme family. UBC12 subfamily. In terms of processing, the acetylation of Met-1 increases affinity for DCUN1D1 by about 2 orders of magnitude and is crucial for NEDD8 transfer to cullins.

It carries out the reaction [E1 NEDD8-activating enzyme]-S-[NEDD8 protein]-yl-L-cysteine + [E2 NEDD8-conjugating enzyme]-L-cysteine = [E1 NEDD8-activating enzyme]-L-cysteine + [E2 NEDD8-conjugating enzyme]-S-[NEDD8-protein]-yl-L-cysteine.. It functions in the pathway protein modification; protein neddylation. Functionally, accepts the ubiquitin-like protein NEDD8 from the UBA3-NAE1 E1 complex and catalyzes its covalent attachment to other proteins. The specific interaction with the E3 ubiquitin ligase rbx1, but not rbx2, suggests that the rbx1-ube2m complex neddylates specific target proteins, such as cul1, cul2, cul3 and cul4. Involved in cell proliferation. The polypeptide is NEDD8-conjugating enzyme Ubc12 (ube2m) (Xenopus laevis (African clawed frog)).